A 254-amino-acid chain; its full sequence is 3-deoxy-manno-octulosonate cytidylyltransferase (254 aa).

The protein belongs to the KdsB family.

It localises to the cytoplasm. The catalysed reaction is 3-deoxy-alpha-D-manno-oct-2-ulosonate + CTP = CMP-3-deoxy-beta-D-manno-octulosonate + diphosphate. The protein operates within nucleotide-sugar biosynthesis; CMP-3-deoxy-D-manno-octulosonate biosynthesis; CMP-3-deoxy-D-manno-octulosonate from 3-deoxy-D-manno-octulosonate and CTP: step 1/1. It functions in the pathway bacterial outer membrane biogenesis; lipopolysaccharide biosynthesis. In terms of biological role, activates KDO (a required 8-carbon sugar) for incorporation into bacterial lipopolysaccharide in Gram-negative bacteria. The protein is 3-deoxy-manno-octulosonate cytidylyltransferase of Pseudomonas syringae pv. syringae (strain B728a).